Consider the following 206-residue polypeptide: Protein YmaB (206 aa).

In Bacillus subtilis (strain 168), this protein is Protein YmaB (ymaB).